We begin with the raw amino-acid sequence, 366 residues long: Acetylserotonin O-methyltransferase 2 (366 aa).

S-adenosyl-L-homocysteine contacts are provided by glycine 209, aspartate 232, aspartate 253, and lysine 267. Residue histidine 271 is the Proton acceptor of the active site. Active-site residues include glutamate 302 and glutamate 332.

This sequence belongs to the class I-like SAM-binding methyltransferase superfamily. Cation-independent O-methyltransferase family. Homodimer. As to expression, expressed in roots, leaves, stems and flowers.

It localises to the cytoplasm. It catalyses the reaction N-acetylserotonin + S-adenosyl-L-methionine = melatonin + S-adenosyl-L-homocysteine + H(+). It functions in the pathway aromatic compound metabolism; melatonin biosynthesis; melatonin from serotonin: step 1/2. Its function is as follows. Methyltransferase which catalyzes the transfer of a methyl group onto N-acetylserotonin, producing melatonin (N-acetyl-5-methoxytryptamine). This chain is Acetylserotonin O-methyltransferase 2, found in Oryza sativa subsp. japonica (Rice).